The chain runs to 439 residues: UPF0229 protein Nham_0975 (439 aa).

The tract at residues 39 to 106 (RSGRISDADG…AGTPDPSMKD (68 aa)) is disordered. Residues 58–76 (STDEPRFEAAKDSGRREHV) show a composition bias toward basic and acidic residues.

This sequence belongs to the UPF0229 family.

The protein is UPF0229 protein Nham_0975 of Nitrobacter hamburgensis (strain DSM 10229 / NCIMB 13809 / X14).